A 277-amino-acid chain; its full sequence is MPSDRRVALVTGANKGVGFAITRALCRLFSGDVLLTAQDEAQGQAAVQQLQAEGLSPRFHQLDITDLQSIRALRDFLRRAYGGLNVLVNNAVIAFKMEDTTPFHIQAEVTMKTNFDGTRDVCTELLPLMRPGGRVVNVSSMTCLRALKSCSPELQQKFRSETITEEELVGLMKKFVEDTKKGVHQTEGWPDTAYGVTKMGVTVLSRIQARHLSEHRGGDKILVNACCPGWVRTDMGGPNATKSPEEGAETPVYLALLPPDAEGPHGQFVMDKKVEQW.

NADP(+) is bound by residues Val-10–Leu-34, Asp-63–Ile-64, and Asn-90. Ser-30 is modified (phosphoserine). Residues Phe-95–Met-97 and Gln-106 contribute to the glutathione site. Position 140 (Ser-140) interacts with substrate. Residue Ala-193–Tyr-194 coordinates glutathione. The active-site Proton acceptor is the Tyr-194. NADP(+) is bound by residues Tyr-194–Lys-198 and Val-231–Thr-233.

This sequence belongs to the short-chain dehydrogenases/reductases (SDR) family. In terms of assembly, monomer. Present in liver and kidney.

It is found in the cytoplasm. It carries out the reaction a secondary alcohol + NADP(+) = a ketone + NADPH + H(+). The catalysed reaction is prostaglandin F2alpha + NADP(+) = prostaglandin E2 + NADPH + H(+). It catalyses the reaction prostaglandin E1 + NADP(+) = 15-oxoprostaglandin E1 + NADPH + H(+). The enzyme catalyses menadione + NADPH + H(+) = menadiol + NADP(+). It carries out the reaction prostaglandin D2 + NADP(+) = 15-oxoprostaglandin D2 + NADPH + H(+). The catalysed reaction is prostaglandin E2 + NADP(+) = 15-oxoprostaglandin E2 + NADPH + H(+). It catalyses the reaction prostaglandin F2alpha + NADP(+) = 15-oxoprostaglandin F2alpha + NADPH + H(+). The enzyme catalyses daunorubicin + NADPH + H(+) = 13-dihydrodaunorubicin + NADP(+). It carries out the reaction S-nitrosoglutathione + NADPH + H(+) = S-(hydroxysulfenamide)glutathione + NADP(+). The catalysed reaction is a primary alcohol + NADP(+) = an aldehyde + NADPH + H(+). It catalyses the reaction cortisol + NADPH + H(+) = 20beta-dihydrocortisol + NADP(+). The enzyme catalyses corticosterone + NADPH + H(+) = 20beta-dihydrocorticosterone + NADP(+). NADPH-dependent reductase with broad substrate specificity. Catalyzes the reduction of a wide variety of carbonyl compounds including quinones, prostaglandins, menadione, plus various xenobiotics. Catalyzes the reduction of the antitumor anthracyclines doxorubicin and daunorubicin to the cardiotoxic compounds doxorubicinol and daunorubicinol. Can convert prostaglandin E to prostaglandin F2-alpha. Can bind glutathione, which explains its higher affinity for glutathione-conjugated substrates. Catalyzes the reduction of S-nitrosoglutathione. In addition, participates in the glucocorticoid metabolism by catalyzing the NADPH-dependent cortisol/corticosterone into 20beta-dihydrocortisol (20b-DHF) or 20beta-corticosterone (20b-DHB), which are weak agonists of NR3C1 and NR3C2 in adipose tissue. The sequence is that of Carbonyl reductase [NADPH] 1 from Oryctolagus cuniculus (Rabbit).